The following is a 699-amino-acid chain: Endogenous retrovirus group K member 8 Env polyprotein (699 aa).

Positions 1–47 (MNPSEMQRKAPPRRRRHRNRAPLTHKMNKMVTSEEQMKLPSTKKAEP) are disordered. The first 89 residues, 1–89 (MNPSEMQRKA…ALMIVSMVVS (89 aa)), serve as a signal peptide directing secretion. Over residues 10-20 (APPRRRRHRNR) the composition is skewed to basic residues. Residues 90-632 (LPMPAGAAVA…NLNPVTWVKT (543 aa)) lie on the Extracellular side of the membrane. N-linked (GlcNAc...) asparagine glycans are attached at residues asparagine 100, asparagine 128, asparagine 153, asparagine 274, asparagine 355, asparagine 372, and asparagine 461. The tract at residues 466–486 (FIFTLIAVIMGLIAVTATAAV) is fusion peptide. 4 N-linked (GlcNAc...) asparagine glycosylation sites follow: asparagine 507, asparagine 554, asparagine 566, and asparagine 585. Residues 633–653 (IGSTTIINLILILVCLFCLLL) form a helical membrane-spanning segment. The Cytoplasmic portion of the chain corresponds to 654-699 (VCRCTQQLRRDSDHRERAMMTMAVLSKRKGGNVGKSKRDQIVTVSV).

This sequence belongs to the beta type-B retroviral envelope protein family. HERV class-II K(HML-2) env subfamily. In terms of assembly, the surface (SU) and transmembrane (TM) proteins form a heterodimer. SU and TM are attached by noncovalent interactions or by a labile interchain disulfide bond. Post-translationally, specific enzymatic cleavages in vivo yield the mature SU and TM proteins.

The protein localises to the cell membrane. It localises to the virion. In terms of biological role, retroviral envelope proteins mediate receptor recognition and membrane fusion during early infection. Endogenous envelope proteins may have kept, lost or modified their original function during evolution. This endogenous envelope protein has lost its original fusogenic properties. SU mediates receptor recognition. Its function is as follows. TM anchors the envelope heterodimer to the viral membrane through one transmembrane domain. The other hydrophobic domain, called fusion peptide, mediates fusion of the viral membrane with the target cell membrane. The protein is Endogenous retrovirus group K member 8 Env polyprotein (ERVK-8) of Homo sapiens (Human).